We begin with the raw amino-acid sequence, 285 residues long: MATARQGENTISLEAIPSNLPSRPTILVFDSGVGGLSVYDEIRQLLPDLHYIYAFDNEAFPYGEKSQQFIIERVVEIVSAVQQRHQLALVVIACNTASTISLPALRERFTFPVVGVVPAVKPAAKLTRNGVVGLLATRATVQRPYTHELITRFATDCQILSLGSSELVELAEAKLQGEAISISELQKILRPWLRLTEPPDTVVLGCTHFPLLAEELKMVLPEGTRLVDSGAAIAKRTAWLIANLDNPPLSTDRNLVYCLKITPKVATLWPILQRYGFNSLEKLPL.

Substrate contacts are provided by residues Asp-30–Ser-31 and Tyr-62–Gly-63. Cys-94 acts as the Proton donor/acceptor in catalysis. Asn-95–Thr-96 serves as a coordination point for substrate. The active-site Proton donor/acceptor is the Cys-206. A substrate-binding site is contributed by Thr-207–His-208.

Belongs to the aspartate/glutamate racemases family.

It catalyses the reaction L-glutamate = D-glutamate. The protein operates within cell wall biogenesis; peptidoglycan biosynthesis. Functionally, provides the (R)-glutamate required for cell wall biosynthesis. The polypeptide is Glutamate racemase (Pectobacterium atrosepticum (strain SCRI 1043 / ATCC BAA-672) (Erwinia carotovora subsp. atroseptica)).